A 235-amino-acid polypeptide reads, in one-letter code: Rab-like protein 3 (235 aa).

A small GTPase-like region spans residues 1-235 (MASLDRVKVL…GGNFKSLHYD (235 aa)). Residues 16-21 (GVGKSS), 148-150 (KLD), and 179-180 (DC) each bind GTP.

Belongs to the small GTPase superfamily. Rab family. Homodimer.

Required for KRAS signaling regulation and modulation of cell proliferation. Regulator of KRAS prenylation, and probably prenylation of other small GTPases. Required for lymphocyte development and function. Not required for myeloid cell development. The polypeptide is Rab-like protein 3 (rabl3) (Xenopus laevis (African clawed frog)).